The sequence spans 908 residues: Probable serine/threonine-protein kinase DDB_G0278521 (908 aa).

At 1–153 the chain is on the extracellular side; the sequence is MSNNKIIESL…RGEKLSTLDR (153 aa). The chain crosses the membrane as a helical span at residues 154-174; sequence IICFSIIYSQDQILLFLLNFI. Residues 175 to 908 lie on the Cytoplasmic side of the membrane; the sequence is LSNINCNNNN…SDQNDSDLYD (734 aa). 5 ANK repeats span residues 258–289, 300–326, 330–361, 362–391, and 395–424; these read LKVY…NVYN, TNRS…NIHD, KGML…ALDQ, SNNT…RLSI, and NGRY…KMNS. Over residues 461-472 the composition is skewed to low complexity; the sequence is NSNNLTNSNSSS. Residues 461–491 form a disordered region; the sequence is NSNNLTNSNSSSVGGLRISNGGNTQQQSIQI. Residues 480–490 are compositionally biased toward polar residues; the sequence is NGGNTQQQSIQ. Residues 495–524 form an ANK 6 repeat; the sequence is ENNTPIDLLVLNNHFTIAIELLKYEGYIVG. The 288-residue stretch at 530 to 817 folds into the Protein kinase domain; that stretch reads FKTARKIGAG…LPIANIPKFL (288 aa). ATP-binding positions include 536 to 544 and lysine 557; that span reads IGAGAFGDV. Aspartate 677 acts as the Proton acceptor in catalysis.

This sequence belongs to the protein kinase superfamily. TKL Ser/Thr protein kinase family.

The protein resides in the membrane. The enzyme catalyses L-seryl-[protein] + ATP = O-phospho-L-seryl-[protein] + ADP + H(+). It carries out the reaction L-threonyl-[protein] + ATP = O-phospho-L-threonyl-[protein] + ADP + H(+). In Dictyostelium discoideum (Social amoeba), this protein is Probable serine/threonine-protein kinase DDB_G0278521.